The chain runs to 427 residues: Enolase (427 aa).

Glutamine 162 contributes to the (2R)-2-phosphoglycerate binding site. The active-site Proton donor is glutamate 204. Mg(2+) is bound by residues aspartate 241, glutamate 283, and aspartate 310. (2R)-2-phosphoglycerate-binding residues include lysine 335, arginine 364, serine 365, and lysine 386. Lysine 335 (proton acceptor) is an active-site residue.

Belongs to the enolase family. It depends on Mg(2+) as a cofactor.

It localises to the cytoplasm. The protein localises to the secreted. It is found in the cell surface. The catalysed reaction is (2R)-2-phosphoglycerate = phosphoenolpyruvate + H2O. Its pathway is carbohydrate degradation; glycolysis; pyruvate from D-glyceraldehyde 3-phosphate: step 4/5. Catalyzes the reversible conversion of 2-phosphoglycerate (2-PG) into phosphoenolpyruvate (PEP). It is essential for the degradation of carbohydrates via glycolysis. The sequence is that of Enolase from Mycolicibacterium smegmatis (strain ATCC 700084 / mc(2)155) (Mycobacterium smegmatis).